A 138-amino-acid polypeptide reads, in one-letter code: Large ribosomal subunit protein uL16 (138 aa).

Residues methionine 1 to glutamine 13 are compositionally biased toward basic residues. The interval methionine 1–isoleucine 20 is disordered.

This sequence belongs to the universal ribosomal protein uL16 family. In terms of assembly, part of the 50S ribosomal subunit.

Its function is as follows. Binds 23S rRNA and is also seen to make contacts with the A and possibly P site tRNAs. The protein is Large ribosomal subunit protein uL16 of Paraburkholderia phytofirmans (strain DSM 17436 / LMG 22146 / PsJN) (Burkholderia phytofirmans).